Consider the following 87-residue polypeptide: CRISPR-associated endoribonuclease Cas2 (87 aa).

Residue aspartate 8 coordinates Mg(2+).

The protein belongs to the CRISPR-associated endoribonuclease Cas2 protein family. As to quaternary structure, homodimer, forms a heterotetramer with a Cas1 homodimer. Mg(2+) is required as a cofactor.

Its function is as follows. CRISPR (clustered regularly interspaced short palindromic repeat), is an adaptive immune system that provides protection against mobile genetic elements (viruses, transposable elements and conjugative plasmids). CRISPR clusters contain sequences complementary to antecedent mobile elements and target invading nucleic acids. CRISPR clusters are transcribed and processed into CRISPR RNA (crRNA). Functions as a ssRNA-specific endoribonuclease. Involved in the integration of spacer DNA into the CRISPR cassette. This Frankia alni (strain DSM 45986 / CECT 9034 / ACN14a) protein is CRISPR-associated endoribonuclease Cas2.